A 375-amino-acid chain; its full sequence is NADH-ubiquinone oxidoreductase 40 kDa subunit, mitochondrial (375 aa).

A mitochondrion-targeting transit peptide spans Met-1 to Ala-26.

Belongs to the complex I NDUFA9 subunit family. As to quaternary structure, complex I is composed of about 40 different subunits. FAD serves as cofactor.

Its subcellular location is the mitochondrion matrix. Accessory subunit of the mitochondrial membrane respiratory chain NADH dehydrogenase (Complex I), that is believed not to be involved in catalysis. Complex I functions in the transfer of electrons from NADH to the respiratory chain. The immediate electron acceptor for the enzyme is believed to be ubiquinone. This chain is NADH-ubiquinone oxidoreductase 40 kDa subunit, mitochondrial (nuo40), found in Neurospora crassa (strain ATCC 24698 / 74-OR23-1A / CBS 708.71 / DSM 1257 / FGSC 987).